Reading from the N-terminus, the 204-residue chain is Thiamine-phosphate synthase (204 aa).

Residues 35–39 (QVREK) and Asn-67 each bind 4-amino-2-methyl-5-(diphosphooxymethyl)pyrimidine. The Mg(2+) site is built by Asp-68 and Asp-87. Residue Ser-106 participates in 4-amino-2-methyl-5-(diphosphooxymethyl)pyrimidine binding. Residue 132–134 (TPT) participates in 2-[(2R,5Z)-2-carboxy-4-methylthiazol-5(2H)-ylidene]ethyl phosphate binding. Lys-135 is a 4-amino-2-methyl-5-(diphosphooxymethyl)pyrimidine binding site. Residues Gly-163 and 183–184 (VS) each bind 2-[(2R,5Z)-2-carboxy-4-methylthiazol-5(2H)-ylidene]ethyl phosphate.

Belongs to the thiamine-phosphate synthase family. Mg(2+) is required as a cofactor.

The enzyme catalyses 2-[(2R,5Z)-2-carboxy-4-methylthiazol-5(2H)-ylidene]ethyl phosphate + 4-amino-2-methyl-5-(diphosphooxymethyl)pyrimidine + 2 H(+) = thiamine phosphate + CO2 + diphosphate. It catalyses the reaction 2-(2-carboxy-4-methylthiazol-5-yl)ethyl phosphate + 4-amino-2-methyl-5-(diphosphooxymethyl)pyrimidine + 2 H(+) = thiamine phosphate + CO2 + diphosphate. It carries out the reaction 4-methyl-5-(2-phosphooxyethyl)-thiazole + 4-amino-2-methyl-5-(diphosphooxymethyl)pyrimidine + H(+) = thiamine phosphate + diphosphate. Its pathway is cofactor biosynthesis; thiamine diphosphate biosynthesis; thiamine phosphate from 4-amino-2-methyl-5-diphosphomethylpyrimidine and 4-methyl-5-(2-phosphoethyl)-thiazole: step 1/1. Its function is as follows. Condenses 4-methyl-5-(beta-hydroxyethyl)thiazole monophosphate (THZ-P) and 2-methyl-4-amino-5-hydroxymethyl pyrimidine pyrophosphate (HMP-PP) to form thiamine monophosphate (TMP). This is Thiamine-phosphate synthase from Vibrio campbellii (strain ATCC BAA-1116).